A 995-amino-acid chain; its full sequence is MSSHKGDGNDSMSSDEDANEFRSHIQLPRVDLANYRKQHQRGSSKTNIAKAGKKLKGKSVRFPDSYGPRDTILSNSSTTNNSTESSGSSDEECDDPDSRLPSFKFNATDVKGESGDAHEGSDGSSDGGSDDESRGSIKFSDSNDDSDREDERRSRTSRGSVGSSSSKPLKGSDDVNEKETNLDHDYDPQEGGTDITDQWKRTQSVSSSSKSFDGEKHSGIKGIFRKFSLADHHGAHGFSNDYEEPSNSDTFLGRVLSFGSGGGGGGGLIPGASRRSREKEGDEEKEVGGGGEDDGAVEMKRLDFSQLNNEAKKLIAVHVPEAANMDQSFTYDEPNQSAGSSRNSTAPLINPDNAQEADDDHKHTDDEDQGKHGFYAPNLDYIIRGNDDPEDQHLLLDESGEDGYIAPPKQVHAGVLSSLLKLYQNPQDEKSSASLSSRAPSDGKTLAEEQEFGTDMPYHMPTSSLDFTKLKSGPQKLVNKFTHRSNKPQPGKEAEADDEDEDEENPDQAYEKANLPSFQNARPKAPKKTIDPVNVSSKFHKKMKRKKIQQQKLRITVHISDILQRQRFIMMICKALMLYGAPTHRLEEYMTMTSRVLEIDGQFVYFPGCMIVSFGDAATRTSEVHIVRCNQGVNLSKLSDTHTIYKAVIHDLISVDEASQQLETLVRKKNQYSPWLSVFLYGFGSAMVCPFAFGGGWLDIPVTFGVGLCVGYLQFFVSSMSNLYSSVFEITASIVVSFIARGIGSINNSKTFCFSAIAQGSLALILPGYIILCGSLELQSRNIVAGSVRMFYAIIYSLFLGFGITLGAALFGWVYKNSTSDKKCRTSHNVNDKYRILFVPMFTICLGLINQARWRQLPVMMVISCTGYVGTYFAGKHFSNVPEFTAAIGAFIVGILGNVYSRVWKGMAVSAMLPAIFVQVPSGIASQSSLLSGIQSADQITHSNSSSDSSSSDSSSSLSFGSTMVEVSIGISVGLFAAALVVYPFGKRRTGLFTL.

Disordered stretches follow at residues 1 to 217 (MSSH…GEKH), 253 to 299 (GRVL…AVEM), 326 to 407 (DQSF…YIAP), and 425 to 508 (NPQD…NPDQ). Residues 74 to 88 (SNSSTTNNSTESSGS) are compositionally biased toward low complexity. The segment covering 110–121 (VKGESGDAHEGS) has biased composition (basic and acidic residues). Positions 157 to 166 (SRGSVGSSSS) are enriched in low complexity. The span at 170 to 187 (KGSDDVNEKETNLDHDYD) shows a compositional bias: basic and acidic residues. The segment covering 259-269 (GSGGGGGGGLI) has biased composition (gly residues). Positions 283 to 296 (EEKEVGGGGEDDGA) are enriched in acidic residues. The span at 326-347 (DQSFTYDEPNQSAGSSRNSTAP) shows a compositional bias: polar residues. Basic and acidic residues-rich tracts occupy residues 359 to 371 (DDHKHTDDEDQGK) and 385 to 396 (GNDDPEDQHLLL). The segment covering 495-506 (EADDEDEDEENP) has biased composition (acidic residues). A run of 10 helical transmembrane segments spans residues 678 to 698 (VFLYGFGSAMVCPFAFGGGWL), 700 to 720 (IPVTFGVGLCVGYLQFFVSSM), 726 to 746 (SVFEITASIVVSFIARGIGSI), 752 to 772 (FCFSAIAQGSLALILPGYIIL), 794 to 814 (IIYSLFLGFGITLGAALFGWV), 833 to 850 (KYRILFVPMFTICLGLIN), 858 to 878 (PVMMVISCTGYVGTYFAGKHF), 881 to 901 (VPEFTAAIGAFIVGILGNVYS), 906 to 926 (GMAVSAMLPAIFVQVPSGIAS), and 965 to 985 (VEVSIGISVGLFAAALVVYPF).

It belongs to the ThrE exporter (TC 2.A.79) family.

Its subcellular location is the membrane. The chain is Pheromone-regulated membrane protein 10 from Pichia sorbitophila (strain ATCC MYA-4447 / BCRC 22081 / CBS 7064 / NBRC 10061 / NRRL Y-12695) (Hybrid yeast).